The sequence spans 103 residues: L-rhamnose mutarotase (103 aa).

A substrate-binding site is contributed by Tyr18. His22 functions as the Proton donor in the catalytic mechanism. Substrate contacts are provided by residues Tyr41 and 76-77 (WW).

The protein belongs to the rhamnose mutarotase family. Homodimer.

Its subcellular location is the cytoplasm. The enzyme catalyses alpha-L-rhamnose = beta-L-rhamnose. Its pathway is carbohydrate metabolism; L-rhamnose metabolism. Its function is as follows. Involved in the anomeric conversion of L-rhamnose. The sequence is that of L-rhamnose mutarotase from Enterococcus faecalis (strain ATCC 700802 / V583).